The following is a 196-amino-acid chain: Imidazoleglycerol-phosphate dehydratase (196 aa).

It belongs to the imidazoleglycerol-phosphate dehydratase family.

The protein resides in the cytoplasm. It catalyses the reaction D-erythro-1-(imidazol-4-yl)glycerol 3-phosphate = 3-(imidazol-4-yl)-2-oxopropyl phosphate + H2O. It participates in amino-acid biosynthesis; L-histidine biosynthesis; L-histidine from 5-phospho-alpha-D-ribose 1-diphosphate: step 6/9. The polypeptide is Imidazoleglycerol-phosphate dehydratase (Akkermansia muciniphila (strain ATCC BAA-835 / DSM 22959 / JCM 33894 / BCRC 81048 / CCUG 64013 / CIP 107961 / Muc)).